Consider the following 126-residue polypeptide: Protein Wnt-1 (126 aa).

Residue S1 is the site of O-palmitoleoyl serine; by PORCN attachment. Residues C92 and C107 are joined by a disulfide bond. 2 N-linked (GlcNAc...) asparagine glycosylation sites follow: N93 and N123.

The protein belongs to the Wnt family. Palmitoleoylation is required for efficient binding to frizzled receptors. Palmitoleoylation is necessary for proper trafficking to cell surface. Depalmitoleoylated by NOTUM, leading to inhibit Wnt signaling pathway.

The protein resides in the secreted. The protein localises to the extracellular space. It is found in the extracellular matrix. In terms of biological role, ligand for members of the frizzled family of seven transmembrane receptors. Acts in the canonical Wnt signaling pathway by promoting beta-catenin-dependent transcriptional activation. Plays an essential role in the development of the embryonic brain and central nervous system (CNS). Has a role in osteoblast function, bone development and bone homeostasis. The protein is Protein Wnt-1 (WNT-1) of Plestiodon skiltonianus (Western skink).